The chain runs to 332 residues: Ketol-acid reductoisomerase (NADP(+)) (332 aa).

The region spanning 2–182 is the KARI N-terminal Rossmann domain; sequence ANIYYDEDAS…GATRAGLIET (181 aa). Residues 25–28, Ser51, Ser53, and 83–86 contribute to the NADP(+) site; these read YGSQ and DTVQ. Residue His108 is part of the active site. Position 134 (Gly134) interacts with NADP(+). Residues 183–327 enclose the KARI C-terminal knotted domain; sequence TFKEETETDL…KELRKMMPWL (145 aa). Residues Asp191, Glu195, Glu227, and Glu231 each coordinate Mg(2+). A substrate-binding site is contributed by Ser252.

It belongs to the ketol-acid reductoisomerase family. Mg(2+) serves as cofactor.

It carries out the reaction (2R)-2,3-dihydroxy-3-methylbutanoate + NADP(+) = (2S)-2-acetolactate + NADPH + H(+). It catalyses the reaction (2R,3R)-2,3-dihydroxy-3-methylpentanoate + NADP(+) = (S)-2-ethyl-2-hydroxy-3-oxobutanoate + NADPH + H(+). It participates in amino-acid biosynthesis; L-isoleucine biosynthesis; L-isoleucine from 2-oxobutanoate: step 2/4. Its pathway is amino-acid biosynthesis; L-valine biosynthesis; L-valine from pyruvate: step 2/4. In terms of biological role, involved in the biosynthesis of branched-chain amino acids (BCAA). Catalyzes an alkyl-migration followed by a ketol-acid reduction of (S)-2-acetolactate (S2AL) to yield (R)-2,3-dihydroxy-isovalerate. In the isomerase reaction, S2AL is rearranged via a Mg-dependent methyl migration to produce 3-hydroxy-3-methyl-2-ketobutyrate (HMKB). In the reductase reaction, this 2-ketoacid undergoes a metal-dependent reduction by NADPH to yield (R)-2,3-dihydroxy-isovalerate. The protein is Ketol-acid reductoisomerase (NADP(+)) of Sulfurihydrogenibium sp. (strain YO3AOP1).